The primary structure comprises 305 residues: Serine/threonine-protein phosphatase 6 catalytic subunit (305 aa).

4 residues coordinate Mn(2+): Asp54, His56, Asp82, and Asn114. Residue His115 is the Proton donor of the active site. The Mn(2+) site is built by His164 and His238.

Belongs to the PPP phosphatase family. PP-6 (PP-V) subfamily. It depends on Mn(2+) as a cofactor.

The catalysed reaction is O-phospho-L-seryl-[protein] + H2O = L-seryl-[protein] + phosphate. It catalyses the reaction O-phospho-L-threonyl-[protein] + H2O = L-threonyl-[protein] + phosphate. The protein is Serine/threonine-protein phosphatase 6 catalytic subunit (ppp6c) of Dictyostelium discoideum (Social amoeba).